A 191-amino-acid chain; its full sequence is Putative manganese efflux pump MntP (191 aa).

The next 6 helical transmembrane spans lie at 3–23, 37–57, 65–85, 107–129, 144–164, and 169–189; these read PISI…AAIG, LRAG…GWLL, VEAF…IHMI, WKLA…GLAF, CTLT…SMVG, and IIGG…HLHG.

Belongs to the MntP (TC 9.B.29) family.

The protein localises to the cell inner membrane. In terms of biological role, probably functions as a manganese efflux pump. In Stenotrophomonas maltophilia (strain K279a), this protein is Putative manganese efflux pump MntP.